The chain runs to 331 residues: Protein Brevis radix-like 1 (331 aa).

The disordered stretch occupies residues 1 to 111 (MFTCINCTKM…HQSGRPDSRF (111 aa)). 2 stretches are compositionally biased toward polar residues: residues 25–41 (STTPNTKEAVKSLTTQI) and 48–66 (FSGSHKQSKPTPGSSSSNL). One can recognise a BRX 1 domain in the interval 137–192 (KEWMAQVEPGVHITFVSLPSGGNDLKRIRFSREVFDKWQAQRWWGENYDRIVELYN). Disordered regions lie at residues 201–246 (LQTP…VPHH) and 258–279 (TTSSRDEPPSMSNASEMQGEWV). The span at 221–235 (DSARESRDWTQRDNN) shows a compositional bias: basic and acidic residues. The 56-residue stretch at 276 to 331 (GEWVEEDEPGVYITIRQLPDGTRELRRVRFSRERFGEVHAKTWWEQNRDRIQTQYL) folds into the BRX 2 domain.

Belongs to the BRX family. In terms of assembly, heterodimer with BRXL1. Expressed in roots.

It localises to the nucleus. In terms of biological role, may act as a regulator of cell proliferation and elongation in the root. The protein is Protein Brevis radix-like 1 (BRXL1) of Arabidopsis thaliana (Mouse-ear cress).